Here is a 194-residue protein sequence, read N- to C-terminus: Xanthine phosphoribosyltransferase (194 aa).

Residues Leu-20 and Asn-27 each contribute to the xanthine site. 128–132 (ANGQA) lines the 5-phospho-alpha-D-ribose 1-diphosphate pocket. Lys-156 provides a ligand contact to xanthine.

Belongs to the purine/pyrimidine phosphoribosyltransferase family. Xpt subfamily. In terms of assembly, homodimer.

Its subcellular location is the cytoplasm. It carries out the reaction XMP + diphosphate = xanthine + 5-phospho-alpha-D-ribose 1-diphosphate. It functions in the pathway purine metabolism; XMP biosynthesis via salvage pathway; XMP from xanthine: step 1/1. In terms of biological role, converts the preformed base xanthine, a product of nucleic acid breakdown, to xanthosine 5'-monophosphate (XMP), so it can be reused for RNA or DNA synthesis. The sequence is that of Xanthine phosphoribosyltransferase from Geobacillus thermodenitrificans (strain NG80-2).